Consider the following 91-residue polypeptide: Small ribosomal subunit protein bS18 (91 aa).

A compositionally biased stretch (low complexity) spans 1–14 (MTNQNQSQTQTTQT). Residues 1–24 (MTNQNQSQTQTTQTVEKVSSRQKK) form a disordered region.

The protein belongs to the bacterial ribosomal protein bS18 family. As to quaternary structure, part of the 30S ribosomal subunit. Forms a tight heterodimer with protein bS6.

Its function is as follows. Binds as a heterodimer with protein bS6 to the central domain of the 16S rRNA, where it helps stabilize the platform of the 30S subunit. The sequence is that of Small ribosomal subunit protein bS18 from Caldicellulosiruptor saccharolyticus (strain ATCC 43494 / DSM 8903 / Tp8T 6331).